The sequence spans 28 residues: M-ectatotoxin-Eb2c (28 aa).

Expressed by the venom gland.

It localises to the secreted. Its function is as follows. Antimicrobial peptide active against Gram-negative bacterium E.coli MH1 (MIC=3.5 uM) and P.aeruginosa PAO1 (MIC=10 uM) and against Gram-positive bacterium A.globiformis VKM Ac-1112 (MIC=1.25 uM). The sequence is that of M-ectatotoxin-Eb2c from Ectatomma brunneum (Ant).